Here is a 318-residue protein sequence, read N- to C-terminus: Malate dehydrogenase (318 aa).

NAD(+) contacts are provided by residues 10-15 (GGGQIG) and Asp-34. Substrate contacts are provided by Arg-83 and Arg-89. NAD(+) contacts are provided by residues Asn-96 and 119–121 (LSN). Residues Asn-121 and Arg-152 each coordinate substrate. Residue His-176 is the Proton acceptor of the active site.

The protein belongs to the LDH/MDH superfamily. MDH type 3 family.

It carries out the reaction (S)-malate + NAD(+) = oxaloacetate + NADH + H(+). Functionally, catalyzes the reversible oxidation of malate to oxaloacetate. This chain is Malate dehydrogenase, found in Syntrophotalea carbinolica (strain DSM 2380 / NBRC 103641 / GraBd1) (Pelobacter carbinolicus).